The primary structure comprises 871 residues: Major vault protein (871 aa).

MVP repeat units lie at residues 2–69, 70–124, 125–177, 178–230, 231–285, 286–336, 337–407, 408–482, and 483–545; these read SKRP…VPPR, HYCV…EVTP, LQIV…EIIK, ATVI…DIVN, AFIL…GVVD, VTTL…IQDV, YVLS…RRQA, IPLD…KTMV, and VSYR…LLGP. The tract at residues 356–381 is disordered; sequence TEAQEEDEEEEEEEEQAKKTSVQRRP. Residues 357–370 show a composition bias toward acidic residues; the sequence is EAQEEDEEEEEEEE. The interval 684–710 is disordered; it reads QEATARHEAERLEQEARGKLERQKITD. Residues 687–710 show a composition bias toward basic and acidic residues; sequence TARHEAERLEQEARGKLERQKITD. In terms of domain architecture, IQ spans 688–717; it reads ARHEAERLEQEARGKLERQKITDQAEAERA.

In terms of assembly, the vault ribonucleoprotein particle is a huge (400 A x 670 A) cage structure of 12.9 MDa. It consists of a dimer of half-vaults, with each half-vault comprising 39 identical major vault protein (MVP) chains, PARP4 and one or more vault RNAs (vRNAs).

The protein localises to the cytoplasm. It localises to the nucleus. Its function is as follows. Required for normal vault structure. Vaults are multi-subunit structures that may act as scaffolds for proteins involved in signal transduction. Vaults may also play a role in nucleo-cytoplasmic transport. The chain is Major vault protein (mvp) from Ictalurus punctatus (Channel catfish).